Here is a 325-residue protein sequence, read N- to C-terminus: 4-hydroxy-3-methylbut-2-enyl diphosphate reductase (325 aa).

Residue Cys25 participates in [4Fe-4S] cluster binding. His54 and His87 together coordinate (2E)-4-hydroxy-3-methylbut-2-enyl diphosphate. Residues His54 and His87 each contribute to the dimethylallyl diphosphate site. Isopentenyl diphosphate contacts are provided by His54 and His87. Cys109 contacts [4Fe-4S] cluster. His137 contributes to the (2E)-4-hydroxy-3-methylbut-2-enyl diphosphate binding site. His137 contributes to the dimethylallyl diphosphate binding site. Residue His137 coordinates isopentenyl diphosphate. Glu139 serves as the catalytic Proton donor. (2E)-4-hydroxy-3-methylbut-2-enyl diphosphate is bound at residue Thr179. Cys209 is a binding site for [4Fe-4S] cluster. Positions 237, 238, 239, and 282 each coordinate (2E)-4-hydroxy-3-methylbut-2-enyl diphosphate. Dimethylallyl diphosphate contacts are provided by Ser237, Ser238, Asn239, and Ser282. The isopentenyl diphosphate site is built by Ser237, Ser238, Asn239, and Ser282.

Belongs to the IspH family. It depends on [4Fe-4S] cluster as a cofactor.

The enzyme catalyses isopentenyl diphosphate + 2 oxidized [2Fe-2S]-[ferredoxin] + H2O = (2E)-4-hydroxy-3-methylbut-2-enyl diphosphate + 2 reduced [2Fe-2S]-[ferredoxin] + 2 H(+). It catalyses the reaction dimethylallyl diphosphate + 2 oxidized [2Fe-2S]-[ferredoxin] + H2O = (2E)-4-hydroxy-3-methylbut-2-enyl diphosphate + 2 reduced [2Fe-2S]-[ferredoxin] + 2 H(+). Its pathway is isoprenoid biosynthesis; dimethylallyl diphosphate biosynthesis; dimethylallyl diphosphate from (2E)-4-hydroxy-3-methylbutenyl diphosphate: step 1/1. It participates in isoprenoid biosynthesis; isopentenyl diphosphate biosynthesis via DXP pathway; isopentenyl diphosphate from 1-deoxy-D-xylulose 5-phosphate: step 6/6. Functionally, catalyzes the conversion of 1-hydroxy-2-methyl-2-(E)-butenyl 4-diphosphate (HMBPP) into a mixture of isopentenyl diphosphate (IPP) and dimethylallyl diphosphate (DMAPP). Acts in the terminal step of the DOXP/MEP pathway for isoprenoid precursor biosynthesis. This Corynebacterium glutamicum (strain ATCC 13032 / DSM 20300 / JCM 1318 / BCRC 11384 / CCUG 27702 / LMG 3730 / NBRC 12168 / NCIMB 10025 / NRRL B-2784 / 534) protein is 4-hydroxy-3-methylbut-2-enyl diphosphate reductase.